Here is a 245-residue protein sequence, read N- to C-terminus: Purine nucleoside phosphorylase (245 aa).

His8 is a binding site for a purine D-ribonucleoside. Phosphate contacts are provided by residues 24–28 (GDPGR), Arg46, and 89–92 (RAGS). A purine D-ribonucleoside is bound at residue 184–185 (ME). Catalysis depends on Asp207, which acts as the Proton donor.

This sequence belongs to the PNP/MTAP phosphorylase family. As to quaternary structure, homohexamer; trimer of homodimers.

The catalysed reaction is inosine + phosphate = alpha-D-ribose 1-phosphate + hypoxanthine. It carries out the reaction guanosine + phosphate = alpha-D-ribose 1-phosphate + guanine. It catalyses the reaction 2'-deoxyguanosine + phosphate = 2-deoxy-alpha-D-ribose 1-phosphate + guanine. The enzyme catalyses 2'-deoxyinosine + phosphate = 2-deoxy-alpha-D-ribose 1-phosphate + hypoxanthine. It functions in the pathway purine metabolism; purine nucleoside salvage. Its function is as follows. As part of the purine salvage pathway, catalyzes the phosphorolytic breakdown of the N-glycosidic bond in the beta-(deoxy)ribonucleoside molecules, with the formation of the corresponding free purine bases and pentose-1-phosphate. Preferentially acts on inosine and guanosine, and to a lesser extent on 2'-deoxyinosine and 2'-deoxyguanosine. The sequence is that of Purine nucleoside phosphorylase from Plasmodium vivax (strain Salvador I).